The primary structure comprises 503 residues: MTDKKYIIALDQGTTSSRAVLLDHNANVVEIAQREFTQIYPRAGWVEHNPMEIWATQSSTLNEVVAKAGITSDEIAAIGITNQRETTIVWEKSTGTPVYNAIVWQCRRTADITDKLKADGHEEYIRNTTGLVVDPYFSGTKVKWILDNVEGAREKAERGELLFGTVDTWLVWKLTQGRVHVTDYTNASRTMLFNIHTKQWDDKMLEILNIPRSILPEVRNSSEIYGQTNIGGKGGVRIPVAGIAGDQQAALYGHLCVHAGQAKNTYGTGCFMLLHTGNKAITSKNGLLTTIACNAKGEPEYALEGSVFIAGASIQWLRDELKIVHDSFDSEYFAQKVTDSNGVYVVPAFTGLGAPYWDPYARGAIFGLSRGANCNHIVRATLQSIAYQTRDVLEAMQSDSGERLQYLRVDGGATNNNFLMQFQADILDVNVERPVVKEVTALGAAYLAGLATGFWKDLDELRDKARVERTFSPDSDNEKRERRYKGWKKAVKRSLEWAKEDEE.

Threonine 14 lines the ADP pocket. Threonine 14, threonine 15, and serine 16 together coordinate ATP. Sn-glycerol 3-phosphate is bound at residue threonine 14. ADP is bound at residue arginine 18. Arginine 84, glutamate 85, tyrosine 136, and aspartate 246 together coordinate sn-glycerol 3-phosphate. Glycerol contacts are provided by arginine 84, glutamate 85, tyrosine 136, aspartate 246, and glutamine 247. ADP contacts are provided by threonine 268 and glycine 311. ATP contacts are provided by threonine 268, glycine 311, glutamine 315, and glycine 412. ADP is bound by residues glycine 412 and asparagine 416.

Belongs to the FGGY kinase family.

The catalysed reaction is glycerol + ATP = sn-glycerol 3-phosphate + ADP + H(+). It participates in polyol metabolism; glycerol degradation via glycerol kinase pathway; sn-glycerol 3-phosphate from glycerol: step 1/1. Its activity is regulated as follows. Inhibited by fructose 1,6-bisphosphate (FBP). Functionally, key enzyme in the regulation of glycerol uptake and metabolism. Catalyzes the phosphorylation of glycerol to yield sn-glycerol 3-phosphate. The sequence is that of Glycerol kinase from Haemophilus influenzae (strain PittEE).